A 296-amino-acid polypeptide reads, in one-letter code: Peptide transport system permease protein SapC (296 aa).

Residues 1-28 (MPYDSVYSEKRPPGTLRTAWRKFYSDAS) are Cytoplasmic-facing. A helical membrane pass occupies residues 29–49 (AMVGLYGCAGLAVLCIFGGWF). At 50 to 98 (APYGIDQQFLGYQLLPPSWSRYGEVSFFLGTDDLGRDVLSRLLSGAAPT) the chain is on the periplasmic side. The chain crosses the membrane as a helical span at residues 99–119 (VGGAFVVTLAATICGLVLGTF). One can recognise an ABC transmembrane type-1 domain in the interval 99 to 284 (VGGAFVVTLA…ISVLLVNLLG (186 aa)). At 120-133 (AGATHGLRSAVLNH) the chain is on the cytoplasmic side. A helical transmembrane segment spans residues 134–154 (ILDTLLAIPSLLLAIIVVAFA). Residues 155 to 196 (GPSLSHAMFAVWLALLPRMVRSIYSMVHDELEKEYVIAARLD) are Periplasmic-facing. Residues 197 to 217 (GASTLNILWFAVMPNITAGLV) form a helical membrane-spanning segment. Topologically, residues 218–222 (TEITR) are cytoplasmic. The chain crosses the membrane as a helical span at residues 223 to 243 (ALSMAILDIAALGFLDLGAQL). The Periplasmic segment spans residues 244 to 257 (PSPEWGAMLGDALE). A helical transmembrane segment spans residues 258 to 278 (LIYVAPWTVMLPGAAIMISVL). Residues 279–296 (LVNLLGDGVRRAIIAGVE) lie on the Cytoplasmic side of the membrane.

The protein belongs to the binding-protein-dependent transport system permease family. OppBC subfamily.

It localises to the cell inner membrane. In terms of biological role, involved in a peptide intake transport system that plays a role in the resistance to antimicrobial peptides. In Escherichia coli O6:H1 (strain CFT073 / ATCC 700928 / UPEC), this protein is Peptide transport system permease protein SapC (sapC).